The following is a 195-amino-acid chain: Probable GTP-binding protein EngB (195 aa).

Positions 22 to 194 (LKGEVAFVGR…LDLISTLLKE (173 aa)) constitute an EngB-type G domain. Residues 30 to 37 (GRSNVGKS), 56 to 60 (GKTRS), 74 to 77 (DLPG), 141 to 144 (TKMD), and 173 to 175 (TSS) each bind GTP. Mg(2+) contacts are provided by S37 and T58.

This sequence belongs to the TRAFAC class TrmE-Era-EngA-EngB-Septin-like GTPase superfamily. EngB GTPase family. The cofactor is Mg(2+).

Necessary for normal cell division and for the maintenance of normal septation. This is Probable GTP-binding protein EngB from Thermotoga maritima (strain ATCC 43589 / DSM 3109 / JCM 10099 / NBRC 100826 / MSB8).